We begin with the raw amino-acid sequence, 153 residues long: UPF0260 protein YcgN (153 aa).

Belongs to the UPF0260 family.

This Salmonella paratyphi B (strain ATCC BAA-1250 / SPB7) protein is UPF0260 protein YcgN.